The chain runs to 353 residues: Transcription termination/antitermination protein NusG (353 aa).

The 35-residue stretch at 301 to 335 (VGDMVKIISGPFEDFAGVIKEIDPERQELKVNVTI) folds into the KOW domain.

This sequence belongs to the NusG family.

With respect to regulation, regulated by autoinhibition via interaction of the N-terminal and the C-terminal domains. Autoinhibition may prevent NusG from interacting prematurely with other components of the transcription complex or non-specific interactions with other cellular components. Its function is as follows. Participates in transcription elongation, termination and antitermination. The polypeptide is Transcription termination/antitermination protein NusG (Thermotoga maritima (strain ATCC 43589 / DSM 3109 / JCM 10099 / NBRC 100826 / MSB8)).